We begin with the raw amino-acid sequence, 490 residues long: Putative alanine aminotransferase (490 aa).

The pyridoxal 5'-phosphate site is built by Ala157, Ser158, Tyr183, Asn239, and Ser308. The residue at position 311 (Lys311) is an N6-(pyridoxal phosphate)lysine. Arg320 serves as a coordination point for pyridoxal 5'-phosphate.

Belongs to the class-I pyridoxal-phosphate-dependent aminotransferase family. Alanine aminotransferase subfamily. In terms of assembly, homodimer. The cofactor is pyridoxal 5'-phosphate.

Its subcellular location is the cytoplasm. It is found in the mitochondrion. It carries out the reaction L-alanine + 2-oxoglutarate = pyruvate + L-glutamate. It participates in amino-acid degradation; L-alanine degradation via transaminase pathway; pyruvate from L-alanine: step 1/1. Functionally, alanine aminotransferase involved in both alanine biosynthesis and utilization. This chain is Putative alanine aminotransferase (alt1), found in Schizosaccharomyces pombe (strain 972 / ATCC 24843) (Fission yeast).